The primary structure comprises 873 residues: Chitin synthase F (873 aa).

The interval 1 to 105 (MEDAHDQSSR…KSGSGLRRYP (105 aa)) is disordered. Polar residues-rich tracts occupy residues 33 to 46 (SYPS…SQSL), 58 to 72 (ISSQ…QNPS), and 80 to 98 (ESEV…TKSG). Asn-506 carries an N-linked (GlcNAc...) asparagine glycan. 7 helical membrane passes run 532 to 554 (LVFL…FSLA), 588 to 608 (IVNN…FFLA), 621 to 641 (ILTF…SFYL), 672 to 692 (GLVL…SILY), 702 to 722 (SWAY…YAFC), 802 to 822 (LVLL…NDSV), and 841 to 861 (VILW…LWFL).

The protein belongs to the chitin synthase family. Class III subfamily.

The protein resides in the cell membrane. It carries out the reaction [(1-&gt;4)-N-acetyl-beta-D-glucosaminyl](n) + UDP-N-acetyl-alpha-D-glucosamine = [(1-&gt;4)-N-acetyl-beta-D-glucosaminyl](n+1) + UDP + H(+). Its function is as follows. Polymerizes chitin, a structural polymer of the cell wall and septum, by transferring the sugar moiety of UDP-GlcNAc to the non-reducing end of the growing chitin polymer. Plays an important role in septal growth or maintenance. Mediates colony spore formation. The polypeptide is Chitin synthase F (Aspergillus niger (strain ATCC MYA-4892 / CBS 513.88 / FGSC A1513)).